The chain runs to 366 residues: Phosphoserine aminotransferase (366 aa).

An L-glutamate-binding site is contributed by arginine 42. Pyridoxal 5'-phosphate is bound by residues alanine 76–threonine 77, tryptophan 101, threonine 156, aspartate 178, and glutamine 201. Residue lysine 202 is modified to N6-(pyridoxal phosphate)lysine. Asparagine 243 to threonine 244 serves as a coordination point for pyridoxal 5'-phosphate.

This sequence belongs to the class-V pyridoxal-phosphate-dependent aminotransferase family. SerC subfamily. As to quaternary structure, homodimer. Pyridoxal 5'-phosphate is required as a cofactor.

The protein resides in the cytoplasm. The enzyme catalyses O-phospho-L-serine + 2-oxoglutarate = 3-phosphooxypyruvate + L-glutamate. The catalysed reaction is 4-(phosphooxy)-L-threonine + 2-oxoglutarate = (R)-3-hydroxy-2-oxo-4-phosphooxybutanoate + L-glutamate. Its pathway is amino-acid biosynthesis; L-serine biosynthesis; L-serine from 3-phospho-D-glycerate: step 2/3. It participates in cofactor biosynthesis; pyridoxine 5'-phosphate biosynthesis; pyridoxine 5'-phosphate from D-erythrose 4-phosphate: step 3/5. Its function is as follows. Catalyzes the reversible conversion of 3-phosphohydroxypyruvate to phosphoserine and of 3-hydroxy-2-oxo-4-phosphonooxybutanoate to phosphohydroxythreonine. This Aromatoleum aromaticum (strain DSM 19018 / LMG 30748 / EbN1) (Azoarcus sp. (strain EbN1)) protein is Phosphoserine aminotransferase.